Reading from the N-terminus, the 513-residue chain is GMP synthase [glutamine-hydrolyzing] (513 aa).

The Glutamine amidotransferase type-1 domain maps to 8–198; sequence KIIVLDYGSQ…ALNICGAKGN (191 aa). The active-site Nucleophile is cysteine 85. Residues histidine 172 and glutamate 174 contribute to the active site. Residues 199–388 enclose the GMPS ATP-PPase domain; it reads WSMENFIDMQ…LGMPDEIVWR (190 aa). 226–232 contributes to the ATP binding site; it reads SGGVDSS.

As to quaternary structure, homodimer.

The enzyme catalyses XMP + L-glutamine + ATP + H2O = GMP + L-glutamate + AMP + diphosphate + 2 H(+). Its pathway is purine metabolism; GMP biosynthesis; GMP from XMP (L-Gln route): step 1/1. Functionally, catalyzes the synthesis of GMP from XMP. The chain is GMP synthase [glutamine-hydrolyzing] (guaA) from Lactococcus lactis subsp. lactis (strain IL1403) (Streptococcus lactis).